Consider the following 83-residue polypeptide: Small ribosomal subunit protein uS17c (83 aa).

Belongs to the universal ribosomal protein uS17 family. In terms of assembly, part of the 30S ribosomal subunit.

It is found in the plastid. It localises to the chloroplast. Its function is as follows. One of the primary rRNA binding proteins, it binds specifically to the 5'-end of 16S ribosomal RNA. The chain is Small ribosomal subunit protein uS17c (rps17) from Porphyra purpurea (Red seaweed).